The chain runs to 185 residues: V-type ATP synthase subunit E (185 aa).

The protein belongs to the V-ATPase E subunit family.

Produces ATP from ADP in the presence of a proton gradient across the membrane. The polypeptide is V-type ATP synthase subunit E (Deinococcus radiodurans (strain ATCC 13939 / DSM 20539 / JCM 16871 / CCUG 27074 / LMG 4051 / NBRC 15346 / NCIMB 9279 / VKM B-1422 / R1)).